A 228-amino-acid polypeptide reads, in one-letter code: uncharacterized protein (228 aa).

An N-terminal signal peptide occupies residues 1–28; that stretch reads MRKKRVITCVMAASLTLGSLLPAGYASA.

This is an uncharacterized protein from Bacillus subtilis (strain 168).